The primary structure comprises 922 residues: Probable outer membrane protein pmp1 (922 aa).

An N-terminal signal peptide occupies residues 1–26; that stretch reads MRFSLCGFPLVFSFTLLSVFDTSLSA. In terms of domain architecture, Autotransporter spans 620 to 922; the sequence is SLQTDRGLWI…NINCGSKFRF (303 aa).

Belongs to the PMP outer membrane protein family.

It is found in the secreted. The protein resides in the cell wall. It localises to the cell outer membrane. The chain is Probable outer membrane protein pmp1 (pmp1) from Chlamydia pneumoniae (Chlamydophila pneumoniae).